A 340-amino-acid chain; its full sequence is Ferrochelatase (340 aa).

Positions 189 and 292 each coordinate Fe cation.

The protein belongs to the ferrochelatase family.

Its subcellular location is the cytoplasm. It carries out the reaction heme b + 2 H(+) = protoporphyrin IX + Fe(2+). It functions in the pathway porphyrin-containing compound metabolism; protoheme biosynthesis; protoheme from protoporphyrin-IX: step 1/1. Its function is as follows. Catalyzes the ferrous insertion into protoporphyrin IX. The chain is Ferrochelatase from Pseudomonas aeruginosa (strain UCBPP-PA14).